The following is a 314-amino-acid chain: Homoserine O-acetyltransferase (314 aa).

C142 serves as the catalytic Acyl-thioester intermediate. Positions 163 and 192 each coordinate substrate. Residue H235 is the Proton acceptor of the active site. The active site involves E237. Residue R249 participates in substrate binding.

This sequence belongs to the MetA family.

The protein resides in the cytoplasm. It catalyses the reaction L-homoserine + acetyl-CoA = O-acetyl-L-homoserine + CoA. It participates in amino-acid biosynthesis; L-methionine biosynthesis via de novo pathway; O-acetyl-L-homoserine from L-homoserine: step 1/1. Its function is as follows. Transfers an acetyl group from acetyl-CoA to L-homoserine, forming acetyl-L-homoserine. The sequence is that of Homoserine O-acetyltransferase from Azobacteroides pseudotrichonymphae genomovar. CFP2.